The following is a 286-amino-acid chain: NADPH-dependent 7-cyano-7-deazaguanine reductase (286 aa).

92-94 (IES) lines the substrate pocket. 94-95 (SK) serves as a coordination point for NADPH. Cysteine 194 serves as the catalytic Thioimide intermediate. Catalysis depends on aspartate 201, which acts as the Proton donor. 233 to 234 (HE) is a substrate binding site. An NADPH-binding site is contributed by 262–263 (RG).

Belongs to the GTP cyclohydrolase I family. QueF type 2 subfamily. Homodimer.

It is found in the cytoplasm. It carries out the reaction 7-aminomethyl-7-carbaguanine + 2 NADP(+) = 7-cyano-7-deazaguanine + 2 NADPH + 3 H(+). It functions in the pathway tRNA modification; tRNA-queuosine biosynthesis. Functionally, catalyzes the NADPH-dependent reduction of 7-cyano-7-deazaguanine (preQ0) to 7-aminomethyl-7-deazaguanine (preQ1). This Shewanella sp. (strain MR-4) protein is NADPH-dependent 7-cyano-7-deazaguanine reductase.